The chain runs to 397 residues: Purine nucleoside transport protein NupG (397 aa).

Transmembrane regions (helical) follow at residues 1-21, 32-52, 62-82, 97-117, 133-153, 165-185, 187-207, 242-262, 282-302, 335-355, and 377-397; these read MYFLLNLVGLIVIMAVVFLCS, IITLIVLELLITWFMLGTKVG, FFTWLIACASDGIAFAFPSVM, IIFIVTFFDILTYFGILPWLI, LESFFSIQMMFLGNTEALAVI, LLTFGLMSMSSISGSIIGSYL, MVPATYVFTAIPLNCLNALII, MLVGMNMVIVILAMVIGYVAL, IFAYLFSPFAFLLGLPVHDAM, VAVATTFLTSFANFSTVGMIY, and LLVSGIAVSLLSAAIVGLFVW.

Belongs to the concentrative nucleoside transporter (CNT) (TC 2.A.41) family.

It is found in the cell membrane. Its function is as follows. Involved in the uptake of the purine ribonucleosides inosine and guanosine. In Bacillus subtilis (strain 168), this protein is Purine nucleoside transport protein NupG (nupG).